The following is a 164-amino-acid chain: Envelope glycoprotein L (164 aa).

The N-terminal stretch at 1–24 is a signal peptide; the sequence is MRSLDRYAIFILLACGLLWRPCLS.

It belongs to the herpesviridae glycoprotein L family. Interacts with glycoprotein H (gH); this interaction is necessary for the correct processing and cell surface expression of gH. The heterodimer gH/gL seems to interact with gB trimers during fusion.

It is found in the virion membrane. It localises to the host cell membrane. Its subcellular location is the host Golgi apparatus. The protein localises to the host trans-Golgi network. The heterodimer glycoprotein H-glycoprotein L is required for the fusion of viral and plasma membranes leading to virus entry into the host cell. Acts as a functional inhibitor of gH and maintains gH in an inhibited form. Upon binding to host integrins, gL dissociates from gH leading to activation of the viral fusion glycoproteins gB and gH. The sequence is that of Envelope glycoprotein L from Equine herpesvirus 2 (strain 86/87) (EHV-2).